We begin with the raw amino-acid sequence, 805 residues long: Phenylalanine--tRNA ligase beta subunit (805 aa).

Positions 39-148 (APPFTGVVVT…AALRPGTDIR (110 aa)) constitute a tRNA-binding domain. Residues 399 to 474 (PVREPVRMRL…RVYGFERIPD (76 aa)) form the B5 domain. Mg(2+) contacts are provided by D452, D458, E461, and E462. Residues 703-804 (SRQPVVVRDL…LVAAHNARQR (102 aa)) enclose the FDX-ACB domain.

It belongs to the phenylalanyl-tRNA synthetase beta subunit family. Type 1 subfamily. In terms of assembly, tetramer of two alpha and two beta subunits. It depends on Mg(2+) as a cofactor.

Its subcellular location is the cytoplasm. The catalysed reaction is tRNA(Phe) + L-phenylalanine + ATP = L-phenylalanyl-tRNA(Phe) + AMP + diphosphate + H(+). The chain is Phenylalanine--tRNA ligase beta subunit from Bordetella pertussis (strain Tohama I / ATCC BAA-589 / NCTC 13251).